The primary structure comprises 203 residues: Thymidylate kinase (203 aa).

10-17 provides a ligand contact to ATP; sequence GIDGAGKS.

This sequence belongs to the thymidylate kinase family.

The catalysed reaction is dTMP + ATP = dTDP + ADP. Phosphorylation of dTMP to form dTDP in both de novo and salvage pathways of dTTP synthesis. In Cupriavidus taiwanensis (strain DSM 17343 / BCRC 17206 / CCUG 44338 / CIP 107171 / LMG 19424 / R1) (Ralstonia taiwanensis (strain LMG 19424)), this protein is Thymidylate kinase.